The chain runs to 159 residues: SsrA-binding protein (159 aa).

The protein belongs to the SmpB family.

Its subcellular location is the cytoplasm. Required for rescue of stalled ribosomes mediated by trans-translation. Binds to transfer-messenger RNA (tmRNA), required for stable association of tmRNA with ribosomes. tmRNA and SmpB together mimic tRNA shape, replacing the anticodon stem-loop with SmpB. tmRNA is encoded by the ssrA gene; the 2 termini fold to resemble tRNA(Ala) and it encodes a 'tag peptide', a short internal open reading frame. During trans-translation Ala-aminoacylated tmRNA acts like a tRNA, entering the A-site of stalled ribosomes, displacing the stalled mRNA. The ribosome then switches to translate the ORF on the tmRNA; the nascent peptide is terminated with the 'tag peptide' encoded by the tmRNA and targeted for degradation. The ribosome is freed to recommence translation, which seems to be the essential function of trans-translation. This Acidiphilium cryptum (strain JF-5) protein is SsrA-binding protein.